The chain runs to 1388 residues: Kinesin-like protein KIF15-A (1388 aa).

The Kinesin motor domain maps to 26 to 364 (AIKVFVRIRP…LQFAQRAKLI (339 aa)). 110 to 117 (GQTGSGKT) contributes to the ATP binding site. A coiled-coil region spans residues 369-1383 (VVNEDTQGNV…ENLFLKESKK (1015 aa)). A disordered region spans residues 1127 to 1156 (EQEKIRPASSNSSSPVVLPETPRTPEGNPY). Residues 1139–1388 (SSPVVLPETP…KESKKCEHCN (250 aa)) are necessary for its targeting to microtubule minus ends.

This sequence belongs to the TRAFAC class myosin-kinesin ATPase superfamily. Kinesin family. KLP2 subfamily. Homodimer. Dimerization is required for targeting to microtubule minus ends. Found in a complex with tpx2 and microtubules. Its association with microtubules and targeting to microtubule minus ends requires tpx2. As to expression, strongly expressed in testis and weakly in lung (at protein level).

It localises to the cytoplasm. It is found in the cytoskeleton. The protein resides in the microtubule organizing center. The protein localises to the centrosome. Its subcellular location is the spindle. It localises to the spindle pole. Functionally, plus-end directed kinesin-like motor enzyme involved in mitotic spindle assembly. Required for centrosome separation and maintenance of spindle bipolarity during mitosis. The polypeptide is Kinesin-like protein KIF15-A (kif15-a) (Xenopus laevis (African clawed frog)).